The chain runs to 504 residues: Ribose import ATP-binding protein RbsA 3 (504 aa).

2 ABC transporter domains span residues alanine 6–proline 238 and isoleucine 251–glycine 494. Glycine 38–serine 45 is a binding site for ATP.

Belongs to the ABC transporter superfamily. Ribose importer (TC 3.A.1.2.1) family. As to quaternary structure, the complex is composed of an ATP-binding protein (RbsA), two transmembrane proteins (RbsC) and a solute-binding protein (RbsB).

It localises to the cell inner membrane. It carries out the reaction D-ribose(out) + ATP + H2O = D-ribose(in) + ADP + phosphate + H(+). Its function is as follows. Part of the ABC transporter complex RbsABC involved in ribose import. Responsible for energy coupling to the transport system. The sequence is that of Ribose import ATP-binding protein RbsA 3 from Rhizobium meliloti (strain 1021) (Ensifer meliloti).